The chain runs to 350 residues: Chemokine C-C motif receptor-like 2 (350 aa).

The Extracellular portion of the chain corresponds to 1-43 (MANYTSAPEDDYDVFIEDDLSNDERELCSPYDPQALLAQLVPY). Residue N3 is glycosylated (N-linked (GlcNAc...) asparagine). The helical transmembrane segment at 44–64 (LFITVFLVGLLDNILVVLIMV) threads the bilayer. Residues 65–74 (KYKGLKQVEN) are Cytoplasmic-facing. Residues 75–95 (IYLLNLAVCNLCFLCTLPFWV) traverse the membrane as a helical segment. The Extracellular portion of the chain corresponds to 96–110 (HMAWHEGDPGEPLCK). The cysteines at positions 109 and 187 are disulfide-linked. The helical transmembrane segment at 111 to 131 (ILLVLYSVGLFSEAFFNVLLT) threads the bilayer. The Cytoplasmic portion of the chain corresponds to 132–149 (VQRYQKFFQMRGFFSATR). Residues 150-170 (MVAGSIFPSALVWVIAVLVML) traverse the membrane as a helical segment. Topologically, residues 171 to 204 (PELAFYKPQMENQKYKCFFGRPLFLPADETFWKH) are extracellular. Residues 205–225 (FLTLKMNILGFLLPLFVFVFC) form a helical membrane-spanning segment. Residues 226-244 (YVRMRRTLKFGERGYDLFK) lie on the Cytoplasmic side of the membrane. The helical transmembrane segment at 245-265 (LVFTIMVVFLLMWGPYNIALF) threads the bilayer. The Extracellular segment spans residues 266–288 (LSAFNEHFSLHGCESSHNLDRST). A helical transmembrane segment spans residues 289–309 (LITKIIATTHCCVNPLLYVFF). Residues 310 to 350 (DEAFRKHLYHFCHLCNDTAPQPTEEPAQGTSREEPCLSTKM) lie on the Cytoplasmic side of the membrane. The segment at 329–350 (PQPTEEPAQGTSREEPCLSTKM) is disordered.

Belongs to the G-protein coupled receptor 1 family.

It localises to the cell membrane. Functionally, receptor for CCL19 and chemerin/RARRES2. Does not appear to be a signaling receptor, but may have a role in modulating chemokine-triggered immune responses by capturing and internalizing CCL19 or by presenting RARRES2 ligand to CMKLR1, a functional signaling receptor. Plays a critical role for the development of Th2 responses. The polypeptide is Chemokine C-C motif receptor-like 2 (CCRL2) (Sus scrofa (Pig)).